A 347-amino-acid chain; its full sequence is Transcription factor EC (347 aa).

The interval Met-1–Ser-119 is necessary for transcriptional transactivation. Residues Gln-139–Leu-192 enclose the bHLH domain. The interval Pro-271–Leu-347 is necessary for transcriptional transactivation. Positions Asp-319–Leu-347 are disordered. Residues Ser-326–Ser-341 show a composition bias toward low complexity.

This sequence belongs to the MiT/TFE family. Homodimer. Forms heterodimers with MITF and TFE3. Interacts with MITF.

It localises to the nucleus. Functionally, transcriptional regulator that acts as a repressor or an activator. Acts as a transcriptional repressor on minimal promoter containing element F (that includes an E-box sequence). Binds to element F in an E-box sequence-specific manner. Acts as a transcriptional transactivator on the proximal promoter region of the tartrate-resistant acid phosphatase (TRAP) E-box containing promoter. Collaborates with MITF in target gene activation. Acts as a transcriptional repressor on minimal promoter containing mu E3 enhancer sequence. Binds to mu E3 DNA sequence of the immunoglobulin heavy-chain gene enhancer. Binds DNA in a homo- or heterodimeric form. This Pan troglodytes (Chimpanzee) protein is Transcription factor EC (TFEC).